The following is a 177-amino-acid chain: Inorganic pyrophosphatase (177 aa).

Substrate contacts are provided by Lys31, Arg45, and Tyr57. Asp67, Asp72, and Asp104 together coordinate Mg(2+). Tyr142 is a binding site for substrate.

Belongs to the PPase family. As to quaternary structure, homohexamer. It depends on Mg(2+) as a cofactor.

Its subcellular location is the cytoplasm. The enzyme catalyses diphosphate + H2O = 2 phosphate + H(+). Its function is as follows. Catalyzes the hydrolysis of inorganic pyrophosphate (PPi) forming two phosphate ions. This chain is Inorganic pyrophosphatase, found in Neisseria meningitidis serogroup A / serotype 4A (strain DSM 15465 / Z2491).